The sequence spans 500 residues: Chromosomal replication initiator protein DnaA (500 aa).

The tract at residues 1–37 (MSDTPFGDADHPRPAPIHPDAVLPPPMSSQSADNDPT) is disordered. Residues 1–103 (MSDTPFGDAD…EELLSDHFHK (103 aa)) form a domain I, interacts with DnaA modulators region. Pro residues predominate over residues 14–27 (PAPIHPDAVLPPPM). Residues 103 to 161 (KAIHLAITIDPDLELALGAPDHEDEEEEVPPAQFVPKVTVGVTEPSARPTTTIDDDEGN) form a domain II region. A domain III, AAA+ region region spans residues 162-378 (RLNPKYTFDS…GALIRVTAFA (217 aa)). The ATP site is built by G206, G208, K209, and T210. A domain IV, binds dsDNA region spans residues 379–500 (SLNQQPVDIS…SEITNRIKQY (122 aa)).

The protein belongs to the DnaA family. As to quaternary structure, oligomerizes as a right-handed, spiral filament on DNA at oriC.

The protein localises to the cytoplasm. Plays an essential role in the initiation and regulation of chromosomal replication. ATP-DnaA binds to the origin of replication (oriC) to initiate formation of the DNA replication initiation complex once per cell cycle. Binds the DnaA box (a 9 base pair repeat at the origin) and separates the double-stranded (ds)DNA. Forms a right-handed helical filament on oriC DNA; dsDNA binds to the exterior of the filament while single-stranded (ss)DNA is stabiized in the filament's interior. The ATP-DnaA-oriC complex binds and stabilizes one strand of the AT-rich DNA unwinding element (DUE), permitting loading of DNA polymerase. After initiation quickly degrades to an ADP-DnaA complex that is not apt for DNA replication. Binds acidic phospholipids. In Cutibacterium acnes (strain DSM 16379 / KPA171202) (Propionibacterium acnes), this protein is Chromosomal replication initiator protein DnaA.